The primary structure comprises 354 residues: MNTLFMHCRPGFEGEVCAEISEHAARLGVAGYAKGKPQSASAEFVCSEEGGAERLMGELRFNQLIFPRQWARGGYVELPESDRISVLLAQLVDFPVFGSLWLEVLDSNEGKELSTFCRKFEVPLRKALEKAGRLVDDPGRPRLLLTFISGRRVFVGVASASNSALWPMGIPRLKFPREAPSRSTLKLEEAWHQFIPREQWEQRLGDDMTGVDLGASPGGWTYQLVRRGMLVTAIDNGPMAESLMDTGLVQHLMADGFTWQPKHPVDWMVCDIVEKPARTTSLIETWLGEGLCREAVVNLKLPMKQRYAEVRRLLDRMEATFKARKIRVSIACKQLYHDREEVTCHLRRLDLKPR.

S-adenosyl-L-methionine-binding positions include S183, 216-219 (SPGG), D235, D255, and D271. K300 functions as the Proton acceptor in the catalytic mechanism.

It belongs to the class I-like SAM-binding methyltransferase superfamily. RNA methyltransferase RlmE family. RlmM subfamily. In terms of assembly, monomer.

It localises to the cytoplasm. It catalyses the reaction cytidine(2498) in 23S rRNA + S-adenosyl-L-methionine = 2'-O-methylcytidine(2498) in 23S rRNA + S-adenosyl-L-homocysteine + H(+). Its function is as follows. Catalyzes the 2'-O-methylation at nucleotide C2498 in 23S rRNA. The sequence is that of Ribosomal RNA large subunit methyltransferase M from Pseudomonas putida (strain ATCC 700007 / DSM 6899 / JCM 31910 / BCRC 17059 / LMG 24140 / F1).